A 201-amino-acid polypeptide reads, in one-letter code: Glutathione peroxidase 1 (201 aa).

S32 is subject to Phosphoserine. U47 is an active-site residue. A non-standard amino acid (selenocysteine) is located at residue U47. K86, K112, and K146 each carry N6-acetyllysine; alternate. An N6-succinyllysine; alternate mark is found at K86, K112, and K146. A phosphoserine mark is found at S195 and S199.

Belongs to the glutathione peroxidase family. In terms of assembly, homotetramer. Interacts with MIEN1. During periods of oxidative stress, Sec-47 may react with a superoxide radical, irreversibly lose hydroselenide and be converted to dehydroalanine.

It localises to the cytoplasm. The protein resides in the mitochondrion. The enzyme catalyses 2 glutathione + H2O2 = glutathione disulfide + 2 H2O. It carries out the reaction a hydroperoxy polyunsaturated fatty acid + 2 glutathione = a hydroxy polyunsaturated fatty acid + glutathione disulfide + H2O. The catalysed reaction is tert-butyl hydroperoxide + 2 glutathione = tert-butanol + glutathione disulfide + H2O. It catalyses the reaction cumene hydroperoxide + 2 glutathione = 2-phenylpropan-2-ol + glutathione disulfide + H2O. The enzyme catalyses (13S)-hydroperoxy-(9Z,11E)-octadecadienoate + 2 glutathione = (13S)-hydroxy-(9Z,11E)-octadecadienoate + glutathione disulfide + H2O. It carries out the reaction (9S)-hydroperoxy-(10E,12Z)-octadecadienoate + 2 glutathione = (9S)-hydroxy-(10E,12Z)-octadecadienoate + glutathione disulfide + H2O. The catalysed reaction is (5S)-hydroperoxy-(6E,8Z,11Z,14Z)-eicosatetraenoate + 2 glutathione = (5S)-hydroxy-(6E,8Z,11Z,14Z)-eicosatetraenoate + glutathione disulfide + H2O. It catalyses the reaction (12S)-hydroperoxy-(5Z,8Z,10E,14Z)-eicosatetraenoate + 2 glutathione = (12S)-hydroxy-(5Z,8Z,10E,14Z)-eicosatetraenoate + glutathione disulfide + H2O. The enzyme catalyses (12R)-hydroperoxy-(5Z,8Z,10E,14Z)-eicosatetraenoate + 2 glutathione = (12R)-hydroxy-(5Z,8Z,10E,14Z)-eicosatetraenoate + glutathione disulfide + H2O. It carries out the reaction (15S)-hydroperoxy-(5Z,8Z,11Z,13E)-eicosatetraenoate + 2 glutathione = (15S)-hydroxy-(5Z,8Z,11Z,13E)-eicosatetraenoate + glutathione disulfide + H2O. The catalysed reaction is (5S)-hydroperoxy-(6E,8Z,11Z,14Z,17Z)-eicosapentaenoate + 2 glutathione = (5S)-hydroxy-(6E,8Z,11Z,14Z,17Z)-eicosapentaenoate + glutathione disulfide + H2O. It catalyses the reaction (12S)-hydroperoxy-(5Z,8Z,10E,14Z,17Z)-eicosapentaenoate + 2 glutathione = (12S)-hydroxy-(5Z,8Z,10E,14Z,17Z)-eicosapentaenoate + glutathione disulfide + H2O. The enzyme catalyses (15S)-hydroperoxy-(5Z,8Z,11Z,13E,17Z)-eicosapentaenoate + 2 glutathione = (15S)-hydroxy-(5Z,8Z,11Z,13E,17Z)-eicosapentaenoate + glutathione disulfide + H2O. It carries out the reaction (15S)-hydroperoxy-(11Z,13E)-eicosadienoate + 2 glutathione = (15S)-hydroxy-(11Z,13E)-eicosadienoate + glutathione disulfide + H2O. The catalysed reaction is (17S)-hydroperoxy-(4Z,7Z,10Z,13Z,15E,19Z)-docosahexaenoate + 2 glutathione = (17S)-hydroxy-(4Z,7Z,10Z,13Z,15E,19Z)-docosahexaenoate + glutathione disulfide + H2O. Its function is as follows. Catalyzes the reduction of hydroperoxides in a glutathione-dependent manner thus regulating cellular redox homeostasis. Can reduce small soluble hydroperoxides such as H2O2, cumene hydroperoxide and tert-butyl hydroperoxide, as well as several fatty acid-derived hydroperoxides. In platelets catalyzes the reduction of 12-hydroperoxyeicosatetraenoic acid, the primary product of the arachidonate 12-lipoxygenase pathway. The polypeptide is Glutathione peroxidase 1 (GPX1) (Callithrix jacchus (White-tufted-ear marmoset)).